A 278-amino-acid chain; its full sequence is MSFDVRSEKIDLIKGPELPDYNMFMSQKFTSYEGKLAILLTGNGDCSFYMWILEDAAKHEWSKKAYVVPDFFPLDPFVLLMQRANENDIVRTFHYDDRVGTSDAIVESTPASPPRHIMFSVIIRKDSPLRNLRGAKSIFKVSFTIILKTFIVKLIMMKDFQLDGDMIISKTLSRTDVDHHGRLFLPKNQVLSVLKKMRNVTKESLRKGIELEVVDIIENDSYSVILKSRNTTNDFVLASGWSIMKHSLDLQEGDDIKLFWDYLNYKFIILNFEYNLIP.

The TF-B3 DNA-binding region spans 168–275 (ISKTLSRTDV…KFIILNFEYN (108 aa)).

The protein resides in the nucleus. This Arabidopsis thaliana (Mouse-ear cress) protein is Putative B3 domain-containing protein At2g21920.